The chain runs to 285 residues: Diaminopimelate epimerase (285 aa).

Substrate is bound by residues Asn14 and Asn67. The active-site Proton donor is Cys76. Substrate-binding positions include 77–78 (GN), Asn166, Asn199, and 217–218 (ER). The Proton acceptor role is filled by Cys226. Residue 227–228 (GT) participates in substrate binding.

This sequence belongs to the diaminopimelate epimerase family. As to quaternary structure, homodimer.

It localises to the cytoplasm. It carries out the reaction (2S,6S)-2,6-diaminopimelate = meso-2,6-diaminopimelate. It functions in the pathway amino-acid biosynthesis; L-lysine biosynthesis via DAP pathway; DL-2,6-diaminopimelate from LL-2,6-diaminopimelate: step 1/1. Catalyzes the stereoinversion of LL-2,6-diaminopimelate (L,L-DAP) to meso-diaminopimelate (meso-DAP), a precursor of L-lysine and an essential component of the bacterial peptidoglycan. The polypeptide is Diaminopimelate epimerase (Bacillus licheniformis (strain ATCC 14580 / DSM 13 / JCM 2505 / CCUG 7422 / NBRC 12200 / NCIMB 9375 / NCTC 10341 / NRRL NRS-1264 / Gibson 46)).